We begin with the raw amino-acid sequence, 217 residues long: Imidazole glycerol phosphate synthase subunit HisH (217 aa).

In terms of domain architecture, Glutamine amidotransferase type-1 spans 5–217 (RVGIINYGVG…LRLLANFLTL (213 aa)). The Nucleophile role is filled by Cys93. Active-site residues include His199 and Glu201.

Heterodimer of HisH and HisF.

The protein localises to the cytoplasm. The catalysed reaction is 5-[(5-phospho-1-deoxy-D-ribulos-1-ylimino)methylamino]-1-(5-phospho-beta-D-ribosyl)imidazole-4-carboxamide + L-glutamine = D-erythro-1-(imidazol-4-yl)glycerol 3-phosphate + 5-amino-1-(5-phospho-beta-D-ribosyl)imidazole-4-carboxamide + L-glutamate + H(+). It carries out the reaction L-glutamine + H2O = L-glutamate + NH4(+). It functions in the pathway amino-acid biosynthesis; L-histidine biosynthesis; L-histidine from 5-phospho-alpha-D-ribose 1-diphosphate: step 5/9. In terms of biological role, IGPS catalyzes the conversion of PRFAR and glutamine to IGP, AICAR and glutamate. The HisH subunit catalyzes the hydrolysis of glutamine to glutamate and ammonia as part of the synthesis of IGP and AICAR. The resulting ammonia molecule is channeled to the active site of HisF. The protein is Imidazole glycerol phosphate synthase subunit HisH of Helicobacter hepaticus (strain ATCC 51449 / 3B1).